Consider the following 177-residue polypeptide: Peptidyl-tRNA hydrolase 1 (177 aa).

Y18 serves as a coordination point for tRNA. H23 acts as the Proton acceptor in catalysis. TRNA contacts are provided by F65, N67, and N113.

This sequence belongs to the PTH family. Monomer.

It localises to the cytoplasm. The enzyme catalyses an N-acyl-L-alpha-aminoacyl-tRNA + H2O = an N-acyl-L-amino acid + a tRNA + H(+). In terms of biological role, hydrolyzes ribosome-free peptidyl-tRNAs (with 1 or more amino acids incorporated), which drop off the ribosome during protein synthesis, or as a result of ribosome stalling. Its function is as follows. Catalyzes the release of premature peptidyl moieties from peptidyl-tRNA molecules trapped in stalled 50S ribosomal subunits, and thus maintains levels of free tRNAs and 50S ribosomes. This is Peptidyl-tRNA hydrolase 1 from Corynebacterium glutamicum (strain ATCC 13032 / DSM 20300 / JCM 1318 / BCRC 11384 / CCUG 27702 / LMG 3730 / NBRC 12168 / NCIMB 10025 / NRRL B-2784 / 534).